Consider the following 335-residue polypeptide: Glyceraldehyde-3-phosphate dehydrogenase, cytosolic (335 aa).

NAD(+) contacts are provided by residues 13–14, aspartate 35, and arginine 80; that span reads RI. D-glyceraldehyde 3-phosphate is bound by residues 151 to 153, threonine 182, 211 to 212, and arginine 234; these read SCT and TG. Cysteine 152 serves as the catalytic Nucleophile. Asparagine 316 provides a ligand contact to NAD(+).

This sequence belongs to the glyceraldehyde-3-phosphate dehydrogenase family. In terms of assembly, homotetramer.

It is found in the cytoplasm. The catalysed reaction is D-glyceraldehyde 3-phosphate + phosphate + NAD(+) = (2R)-3-phospho-glyceroyl phosphate + NADH + H(+). The protein operates within carbohydrate degradation; glycolysis; pyruvate from D-glyceraldehyde 3-phosphate: step 1/5. The polypeptide is Glyceraldehyde-3-phosphate dehydrogenase, cytosolic (GAPC) (Gracilaria gracilis (Red alga)).